We begin with the raw amino-acid sequence, 376 residues long: Mitochondrial distribution and morphology protein 34 (376 aa).

The region spanning 1–194 is the SMP-LTD domain; that stretch reads MSFTFNWPRF…LPGIIHRLSQ (194 aa). Disordered stretches follow at residues 207–249 and 286–376; these read SKHP…PKIV and SVPP…LHPS. Acidic residues predominate over residues 218 to 230; the sequence is EISEPGDYGEEGE. Residues 306 to 318 are compositionally biased toward basic residues; the sequence is VKAKRKRTYRLGG. The segment covering 350-362 has biased composition (basic and acidic residues); that stretch reads MDRYFRSYDDHSR.

The protein belongs to the MDM34 family. In terms of assembly, component of the ER-mitochondria encounter structure (ERMES) or MDM complex, composed of MMM1, MDM10, MDM12 and MDM34.

It localises to the mitochondrion outer membrane. In terms of biological role, component of the ERMES/MDM complex, which serves as a molecular tether to connect the endoplasmic reticulum (ER) and mitochondria. Components of this complex are involved in the control of mitochondrial shape and protein biogenesis, and function in nonvesicular lipid trafficking between the ER and mitochondria. MDM34 is required for the interaction of the ER-resident membrane protein MMM1 and the outer mitochondrial membrane-resident beta-barrel protein MDM10. This is Mitochondrial distribution and morphology protein 34 from Laccaria bicolor (strain S238N-H82 / ATCC MYA-4686) (Bicoloured deceiver).